Reading from the N-terminus, the 91-residue chain is MKKLVLLSAFVLLAFQVQADSIQNTDEETKTEEQPGEENQAMSVSFGDPEGSALQDAAVGMARPCPPCPSCPSCPWCPMCPRCPSCKCNPK.

The N-terminal stretch at Met-1–Ala-19 is a signal peptide. A propeptide spanning residues Asp-20–Cys-65 is cleaved from the precursor. A disordered region spans residues Ser-21–Ser-52. Repeat copies occupy residues Cys-65–Pro-67, Cys-68–Ser-70, Cys-71–Ser-73, Cys-74–Trp-76, Cys-77–Met-79, Cys-80–Arg-82, and Cys-83–Ser-85. The 7 X 3 AA tandem repeats of C-P-X stretch occupies residues Cys-65–Ser-85.

This sequence belongs to the alpha-defensin family. In terms of tissue distribution, paneth cells of the small bowel.

It localises to the secreted. In terms of biological role, apparent precursor of a secreted, cationic, proline- and cysteine-rich peptide that contains Cys-Pro-Xaa repeats. Unlike cryptdin, the proposed mature peptide region lacks the structural motif characteristic of defensins. It may have microbicidal activities. This chain is Alpha-defensin-related sequence 10 (Defa-rs10), found in Mus musculus (Mouse).